Reading from the N-terminus, the 166-residue chain is Interferon gamma (166 aa).

Positions 1–23 are cleaved as a signal peptide; sequence MNYTTICLAFQLCVIFCSSGYYC. Glutamine 24 is modified (pyrrolidone carboxylic acid). 3 N-linked (GlcNAc...) asparagine glycosylation sites follow: asparagine 39, asparagine 106, and asparagine 107.

It belongs to the type II (or gamma) interferon family. As to quaternary structure, homodimer. Interacts with IFNGR1 (via extracellular domain); this interaction promotes IFNGR1 dimerization.

It localises to the secreted. In terms of biological role, type II interferon produced by immune cells such as T-cells and NK cells that plays crucial roles in antimicrobial, antiviral, and antitumor responses by activating effector immune cells and enhancing antigen presentation. Primarily signals through the JAK-STAT pathway after interaction with its receptor IFNGR1 to affect gene regulation. Upon IFNG binding, IFNGR1 intracellular domain opens out to allow association of downstream signaling components JAK2, JAK1 and STAT1, leading to STAT1 activation, nuclear translocation and transcription of IFNG-regulated genes. Many of the induced genes are transcription factors such as IRF1 that are able to further drive regulation of a next wave of transcription. Plays a role in class I antigen presentation pathway by inducing a replacement of catalytic proteasome subunits with immunoproteasome subunits. In turn, increases the quantity, quality, and repertoire of peptides for class I MHC loading. Increases the efficiency of peptide generation also by inducing the expression of activator PA28 that associates with the proteasome and alters its proteolytic cleavage preference. Up-regulates as well MHC II complexes on the cell surface by promoting expression of several key molecules such as cathepsins B/CTSB, H/CTSH, and L/CTSL. Participates in the regulation of hematopoietic stem cells during development and under homeostatic conditions by affecting their development, quiescence, and differentiation. The protein is Interferon gamma (IFNG) of Mustela putorius furo (European domestic ferret).